A 378-amino-acid polypeptide reads, in one-letter code: Anhydro-N-acetylmuramic acid kinase 2 (378 aa).

14–22 (GTVLDGNID) is a binding site for ATP.

Belongs to the anhydro-N-acetylmuramic acid kinase family.

It carries out the reaction 1,6-anhydro-N-acetyl-beta-muramate + ATP + H2O = N-acetyl-D-muramate 6-phosphate + ADP + H(+). It functions in the pathway amino-sugar metabolism; 1,6-anhydro-N-acetylmuramate degradation. The protein operates within cell wall biogenesis; peptidoglycan recycling. Functionally, catalyzes the specific phosphorylation of 1,6-anhydro-N-acetylmuramic acid (anhMurNAc) with the simultaneous cleavage of the 1,6-anhydro ring, generating MurNAc-6-P. Is required for the utilization of anhMurNAc either imported from the medium or derived from its own cell wall murein, and thus plays a role in cell wall recycling. The polypeptide is Anhydro-N-acetylmuramic acid kinase 2 (Jannaschia sp. (strain CCS1)).